Reading from the N-terminus, the 373-residue chain is mRNA export factor rae-1 (373 aa).

M1 carries the N-acetylmethionine modification. WD repeat units follow at residues 40–82, 87–126, 128–169, and 276–315; these read APED…TFEG, NIPAPILDIAWIEDSSKIFIACADKEARLWDLASNQVAVV, THDG…NQTQ, and QEIYAVNDICFHPQHGTLVTIGSDGRYSMWDKDARTKLKT.

It belongs to the WD repeat rae1 family. The nuclear pore complex (NPC) constitutes the exclusive means of nucleocytoplasmic transport. NPCs allow the passive diffusion of ions and small molecules and the active, nuclear transport receptor-mediated bidirectional transport of macromolecules such as proteins, RNAs, ribonucleoparticles (RNPs), and ribosomal subunits across the nuclear envelope. Interacts with rpm-1. As to expression, expressed along the ventral and dorsal nerve cords.

Its subcellular location is the nucleus. It is found in the nuclear pore complex. The protein localises to the cell projection. It localises to the axon. The protein resides in the synapse. Functionally, functions as a component of the nuclear pore complex (NPC). NPC components, collectively referred to as nucleoporins (NUPs), can play the role of both NPC structural components and of docking or interaction partners for transiently associated nuclear transport factors. It is specifically important for nuclear mRNA export. Has a role in neuronal development, where it acts downstream of rpm-1 to control axon termination and synapse formation in anterior lateral microtubule (ALM) and posterior lateral microtubule (PLM) mechanosensory neurons. The sequence is that of mRNA export factor rae-1 from Caenorhabditis elegans.